Consider the following 351-residue polypeptide: Thiamine-phosphate synthase (351 aa).

The unknown stretch occupies residues 1–127; that stretch reads MQNLAPASEG…SETAKALRYR (127 aa). Residues 64 to 84 form a disordered region; that stretch reads RAARQTDQDPGTALSHPQERD. The tract at residues 128 to 351 is thiamine-phosphate synthase; the sequence is VYILEQALTL…LRRLSQGEPS (224 aa). Residues 178–182 and Asn210 contribute to the 4-amino-2-methyl-5-(diphosphooxymethyl)pyrimidine site; that span reads QYRDK. The Mg(2+) site is built by Asp211 and Asp230. Residue Ser249 participates in 4-amino-2-methyl-5-(diphosphooxymethyl)pyrimidine binding. 275-277 provides a ligand contact to 2-[(2R,5Z)-2-carboxy-4-methylthiazol-5(2H)-ylidene]ethyl phosphate; sequence TPT. Lys278 is a binding site for 4-amino-2-methyl-5-(diphosphooxymethyl)pyrimidine. Gly305 lines the 2-[(2R,5Z)-2-carboxy-4-methylthiazol-5(2H)-ylidene]ethyl phosphate pocket.

It belongs to the thiamine-phosphate synthase family. Mg(2+) is required as a cofactor.

The catalysed reaction is 2-[(2R,5Z)-2-carboxy-4-methylthiazol-5(2H)-ylidene]ethyl phosphate + 4-amino-2-methyl-5-(diphosphooxymethyl)pyrimidine + 2 H(+) = thiamine phosphate + CO2 + diphosphate. It catalyses the reaction 2-(2-carboxy-4-methylthiazol-5-yl)ethyl phosphate + 4-amino-2-methyl-5-(diphosphooxymethyl)pyrimidine + 2 H(+) = thiamine phosphate + CO2 + diphosphate. The enzyme catalyses 4-methyl-5-(2-phosphooxyethyl)-thiazole + 4-amino-2-methyl-5-(diphosphooxymethyl)pyrimidine + H(+) = thiamine phosphate + diphosphate. Its pathway is cofactor biosynthesis; thiamine diphosphate biosynthesis; thiamine phosphate from 4-amino-2-methyl-5-diphosphomethylpyrimidine and 4-methyl-5-(2-phosphoethyl)-thiazole: step 1/1. In terms of biological role, condenses 4-methyl-5-(beta-hydroxyethyl)thiazole monophosphate (THZ-P) and 2-methyl-4-amino-5-hydroxymethyl pyrimidine pyrophosphate (HMP-PP) to form thiamine monophosphate (TMP). The polypeptide is Thiamine-phosphate synthase (Thermosynechococcus vestitus (strain NIES-2133 / IAM M-273 / BP-1)).